The chain runs to 306 residues: uncharacterized protein (306 aa).

This is an uncharacterized protein from Haemophilus influenzae (strain ATCC 51907 / DSM 11121 / KW20 / Rd).